We begin with the raw amino-acid sequence, 261 residues long: Glucose 1-dehydrogenase (261 aa).

11–35 (AITGAASGLGKAMAIRFGKEQAKVV) contacts NADP(+). Serine 145 contacts substrate. Residue tyrosine 158 is the Proton acceptor of the active site.

This sequence belongs to the short-chain dehydrogenases/reductases (SDR) family. Homotetramer.

It catalyses the reaction D-glucose + NAD(+) = D-glucono-1,5-lactone + NADH + H(+). The catalysed reaction is D-glucose + NADP(+) = D-glucono-1,5-lactone + NADPH + H(+). In Bacillus subtilis (strain 168), this protein is Glucose 1-dehydrogenase (gdh).